A 362-amino-acid chain; its full sequence is Peptide chain release factor 1 (362 aa).

At Gln237 the chain carries N5-methylglutamine.

This sequence belongs to the prokaryotic/mitochondrial release factor family. Post-translationally, methylated by PrmC. Methylation increases the termination efficiency of RF1.

Its subcellular location is the cytoplasm. In terms of biological role, peptide chain release factor 1 directs the termination of translation in response to the peptide chain termination codons UAG and UAA. The polypeptide is Peptide chain release factor 1 (Vibrio campbellii (strain ATCC BAA-1116)).